We begin with the raw amino-acid sequence, 150 residues long: Transcriptional regulator MraZ (150 aa).

2 consecutive SpoVT-AbrB domains span residues 9-54 (QSIH…PPEE) and 83-126 (AEEC…NKST).

The protein belongs to the MraZ family. Forms oligomers.

Its subcellular location is the cytoplasm. The protein localises to the nucleoid. This Syntrophobacter fumaroxidans (strain DSM 10017 / MPOB) protein is Transcriptional regulator MraZ.